Reading from the N-terminus, the 290-residue chain is 4-hydroxy-tetrahydrodipicolinate synthase (290 aa).

T44 provides a ligand contact to pyruvate. Y132 (proton donor/acceptor) is an active-site residue. K160 acts as the Schiff-base intermediate with substrate in catalysis. I202 lines the pyruvate pocket.

It belongs to the DapA family. In terms of assembly, homotetramer; dimer of dimers.

Its subcellular location is the cytoplasm. The catalysed reaction is L-aspartate 4-semialdehyde + pyruvate = (2S,4S)-4-hydroxy-2,3,4,5-tetrahydrodipicolinate + H2O + H(+). Its pathway is amino-acid biosynthesis; L-lysine biosynthesis via DAP pathway; (S)-tetrahydrodipicolinate from L-aspartate: step 3/4. Its function is as follows. Catalyzes the condensation of (S)-aspartate-beta-semialdehyde [(S)-ASA] and pyruvate to 4-hydroxy-tetrahydrodipicolinate (HTPA). In Geobacter sp. (strain M21), this protein is 4-hydroxy-tetrahydrodipicolinate synthase.